A 165-amino-acid polypeptide reads, in one-letter code: Phosphopantetheine adenylyltransferase (165 aa).

Serine 10 serves as a coordination point for substrate. ATP contacts are provided by residues 10–11 (SF) and histidine 18. Substrate-binding residues include lysine 42, leucine 74, and arginine 88. ATP is bound by residues 89–91 (GLR), glutamate 99, and 124–130 (WFYTSST).

The protein belongs to the bacterial CoaD family. Homohexamer. The cofactor is Mg(2+).

It is found in the cytoplasm. The enzyme catalyses (R)-4'-phosphopantetheine + ATP + H(+) = 3'-dephospho-CoA + diphosphate. It participates in cofactor biosynthesis; coenzyme A biosynthesis; CoA from (R)-pantothenate: step 4/5. Its function is as follows. Reversibly transfers an adenylyl group from ATP to 4'-phosphopantetheine, yielding dephospho-CoA (dPCoA) and pyrophosphate. The sequence is that of Phosphopantetheine adenylyltransferase from Syntrophus aciditrophicus (strain SB).